A 314-amino-acid polypeptide reads, in one-letter code: MSSALPDVSVTDLAPSLSPLQWVGMQGIDLPVRIQEPTYQRELHARADVQVDLPAPHVKGIHMSRLYRLLDAWGQAAAVSPASLFALLQEMIDSHQDCESRSARVRLDFDLLVRRPALVTEGLSGWKSYPVHVLATKVGGALNLSIEVRIGYSSTCPCSAALSRQLIEDGFLRTFKDQPLLEVSAVAQWLRSNASLATPHSQRSEARVRVTVPADAPDLGLLALIDHVEGALRTPVQTAVKRADEQAFAALNGQNLMFVEDAARRIQASLHGYRDSQVHVRHLESLHPHDASAWSAPQAAAPDQQESFATGNER.

A disordered region spans residues 290–314 (DASAWSAPQAAAPDQQESFATGNER). Over residues 291 to 304 (ASAWSAPQAAAPDQ) the composition is skewed to low complexity. The segment covering 305 to 314 (QESFATGNER) has biased composition (polar residues).

The protein belongs to the GTP cyclohydrolase IV family.

It catalyses the reaction GTP + H2O = 7,8-dihydroneopterin 3'-triphosphate + formate + H(+). The protein operates within cofactor biosynthesis; 7,8-dihydroneopterin triphosphate biosynthesis; 7,8-dihydroneopterin triphosphate from GTP: step 1/1. Functionally, converts GTP to 7,8-dihydroneopterin triphosphate. This chain is GTP cyclohydrolase FolE2, found in Pseudomonas putida (strain ATCC 47054 / DSM 6125 / CFBP 8728 / NCIMB 11950 / KT2440).